The following is a 288-amino-acid chain: Tryptophan 2,3-dioxygenase (288 aa).

Substrate contacts are provided by residues 57–61, Y119, and R123; that span reads FIIQH. Residue H246 participates in heme binding. T260 serves as a coordination point for substrate.

This sequence belongs to the tryptophan 2,3-dioxygenase family. Homotetramer. Heme is required as a cofactor.

It carries out the reaction L-tryptophan + O2 = N-formyl-L-kynurenine. The protein operates within amino-acid degradation; L-tryptophan degradation via kynurenine pathway; L-kynurenine from L-tryptophan: step 1/2. Heme-dependent dioxygenase that catalyzes the oxidative cleavage of the L-tryptophan (L-Trp) pyrrole ring and converts L-tryptophan to N-formyl-L-kynurenine. Catalyzes the oxidative cleavage of the indole moiety. This chain is Tryptophan 2,3-dioxygenase, found in Pseudomonas aeruginosa (strain ATCC 15692 / DSM 22644 / CIP 104116 / JCM 14847 / LMG 12228 / 1C / PRS 101 / PAO1).